The following is a 332-amino-acid chain: Adenosine deaminase (332 aa).

Residues histidine 12 and histidine 14 each contribute to the Zn(2+) site. Residues histidine 14, aspartate 16, and glycine 169 each contribute to the substrate site. Zn(2+) is bound at residue histidine 196. The active-site Proton donor is glutamate 199. Residue aspartate 277 coordinates Zn(2+).

This sequence belongs to the metallo-dependent hydrolases superfamily. Adenosine and AMP deaminases family. Adenosine deaminase subfamily. It depends on Zn(2+) as a cofactor.

The catalysed reaction is adenosine + H2O + H(+) = inosine + NH4(+). It catalyses the reaction 2'-deoxyadenosine + H2O + H(+) = 2'-deoxyinosine + NH4(+). Catalyzes the hydrolytic deamination of adenosine and 2-deoxyadenosine. This Vibrio atlanticus (strain LGP32) (Vibrio splendidus (strain Mel32)) protein is Adenosine deaminase.